A 349-amino-acid polypeptide reads, in one-letter code: Micronemal protein 6 (349 aa).

An N-terminal signal peptide occupies residues 1–23 (MRLFRCCAAAVVAAESLLWLKNG). 3 consecutive EGF-like domains span residues 36 to 80 (IADN…VTCM), 96 to 134 (TPAA…SLDG), and 147 to 192 (GCEE…ITCK). 9 cysteine pairs are disulfide-bonded: Cys-40–Cys-53, Cys-45–Cys-62, Cys-64–Cys-79, Cys-100–Cys-113, Cys-105–Cys-122, Cys-124–Cys-140, Cys-148–Cys-162, Cys-153–Cys-173, and Cys-175–Cys-191. The interval 194–291 (VPPHYRKPPF…EEGSGHAGAI (98 aa)) is disordered. The interval 204 to 283 (EFGKGGHPVD…SEEQGKEREE (80 aa)) is acidic domain. 2 stretches are compositionally biased toward basic and acidic residues: residues 210–247 (HPVD…RTPL) and 276–285 (EQGKEREEGS). The chain crosses the membrane as a helical span at residues 290 to 310 (AIAGGVIGGLLLLSAAGAGVA).

Interacts directly with MIC1. Part of the MIC6-MIC1-MIC4 complex. In terms of processing, subject to proteolytic processing involving both the N-terminus and the C-terminus. The first EGF-like domain (EGF-like domain 1) is removed by proteolytic cleavage by ASP3 and is not present in the mature protein. Released as soluble 35 kDa protein after proteolytic processing at the C-terminus.

The protein resides in the cytoplasmic vesicle. It is found in the secretory vesicle. It localises to the microneme membrane. The protein localises to the secreted. Functionally, escorter protein required for import of MIC1 and MIC4 adhesins into the microneme. The protein is Micronemal protein 6 of Toxoplasma gondii.